The sequence spans 210 residues: MNSKFIVIEGLEGAGKTTAREAVVSELQRHGINDIIFTREPGGTPLAEKLRELIKQGVEGERVTDSAELLMLYAARVQLVENVIKPALARGAWVVGDRHDLSSQAYQGGGRGMDAGLMNSLKQAVLGDFAPDLTLYLDVTPQIGLQRARARGELDRIEQESLNFFTRTRERYLALASADSRIKTVDATRPLEQVTAALQQTLTQWLQEQR.

10–17 (GLEGAGKT) serves as a coordination point for ATP.

It belongs to the thymidylate kinase family.

The enzyme catalyses dTMP + ATP = dTDP + ADP. Its function is as follows. Phosphorylation of dTMP to form dTDP in both de novo and salvage pathways of dTTP synthesis. This is Thymidylate kinase from Erwinia tasmaniensis (strain DSM 17950 / CFBP 7177 / CIP 109463 / NCPPB 4357 / Et1/99).